The chain runs to 257 residues: uncharacterized protein (257 aa).

A helical transmembrane segment spans residues 7–27; sequence IGILEIVVILSILITSVSLAY.

The protein resides in the membrane. This is an uncharacterized protein from Methanocaldococcus jannaschii (strain ATCC 43067 / DSM 2661 / JAL-1 / JCM 10045 / NBRC 100440) (Methanococcus jannaschii).